Reading from the N-terminus, the 446-residue chain is 3-phosphoshikimate 1-carboxyvinyltransferase (446 aa).

Residues Lys-27, Ser-28, and Arg-32 each contribute to the 3-phosphoshikimate site. A phosphoenolpyruvate-binding site is contributed by Lys-27. Residues Gly-100 and Arg-128 each coordinate phosphoenolpyruvate. 3-phosphoshikimate contacts are provided by Ser-177, Gln-179, Asp-330, and Lys-357. Gln-179 is a phosphoenolpyruvate binding site. Residue Asp-330 is the Proton acceptor of the active site. Positions 361 and 406 each coordinate phosphoenolpyruvate.

It belongs to the EPSP synthase family. As to quaternary structure, monomer.

It is found in the cytoplasm. It catalyses the reaction 3-phosphoshikimate + phosphoenolpyruvate = 5-O-(1-carboxyvinyl)-3-phosphoshikimate + phosphate. Its pathway is metabolic intermediate biosynthesis; chorismate biosynthesis; chorismate from D-erythrose 4-phosphate and phosphoenolpyruvate: step 6/7. Functionally, catalyzes the transfer of the enolpyruvyl moiety of phosphoenolpyruvate (PEP) to the 5-hydroxyl of shikimate-3-phosphate (S3P) to produce enolpyruvyl shikimate-3-phosphate and inorganic phosphate. The polypeptide is 3-phosphoshikimate 1-carboxyvinyltransferase (Sphingopyxis alaskensis (strain DSM 13593 / LMG 18877 / RB2256) (Sphingomonas alaskensis)).